Consider the following 99-residue polypeptide: Elongin-C (99 aa).

N-acetylserine is present on Ser2. Ser2 is subject to Phosphoserine.

It belongs to the SKP1 family. Heterodimer with ELA1. Component of a CRL3 E3 ubiquitin ligase complex consisting of the cullin CUL3, the linker protein ELC1, the substrate receptor ELA1, and the RING protein HRT1. Interacts with CIN5. Interacts with PCL6. Interacts with SNF4. Interacts with the large RNA polymerase II subunit RPO21 in a manner dependent on DEF1. Interacts with DEF1. Interacts with RAD7. Interacts with RAD16.

The protein localises to the cytoplasm. It localises to the nucleus. Functionally, as part of the CRL3 E3 ubiquitin ligase complex; polyubiquitylates monoubiquitylated RNA polymerase II subunit RPO21 to trigger its proteolysis; plays a role in global genomic repair. Prevents degradation of interacting proteins like PCL6 by the proteasome. The protein is Elongin-C (ELC1) of Saccharomyces cerevisiae (strain ATCC 204508 / S288c) (Baker's yeast).